The sequence spans 292 residues: Homoserine kinase (292 aa).

81 to 91 (RPRSGLGSSGA) is an ATP binding site.

The protein belongs to the GHMP kinase family. Homoserine kinase subfamily.

The protein localises to the cytoplasm. The catalysed reaction is L-homoserine + ATP = O-phospho-L-homoserine + ADP + H(+). The protein operates within amino-acid biosynthesis; L-threonine biosynthesis; L-threonine from L-aspartate: step 4/5. Catalyzes the ATP-dependent phosphorylation of L-homoserine to L-homoserine phosphate. This Thermococcus kodakarensis (strain ATCC BAA-918 / JCM 12380 / KOD1) (Pyrococcus kodakaraensis (strain KOD1)) protein is Homoserine kinase.